A 166-amino-acid chain; its full sequence is Regulatory protein RecX (166 aa).

Belongs to the RecX family.

It is found in the cytoplasm. In terms of biological role, modulates RecA activity. The protein is Regulatory protein RecX of Klebsiella pneumoniae (strain 342).